Reading from the N-terminus, the 454-residue chain is Tubulin alpha-A chain (454 aa).

Residues Gln12, Asp72, Ser141, Gly145, Thr146, Thr180, Asn207, and Asn229 each contribute to the GTP site. Residue Asp72 participates in Mg(2+) binding. Glu255 is an active-site residue.

Belongs to the tubulin family. Dimer of alpha and beta chains. A typical microtubule is a hollow water-filled tube with an outer diameter of 25 nm and an inner diameter of 15 nM. Alpha-beta heterodimers associate head-to-tail to form protofilaments running lengthwise along the microtubule wall with the beta-tubulin subunit facing the microtubule plus end conferring a structural polarity. Microtubules usually have 13 protofilaments but different protofilament numbers can be found in some organisms and specialized cells. Mg(2+) serves as cofactor.

It is found in the cytoplasm. It localises to the cytoskeleton. The catalysed reaction is GTP + H2O = GDP + phosphate + H(+). Tubulin is the major constituent of microtubules, a cylinder consisting of laterally associated linear protofilaments composed of alpha- and beta-tubulin heterodimers. Microtubules grow by the addition of GTP-tubulin dimers to the microtubule end, where a stabilizing cap forms. Below the cap, tubulin dimers are in GDP-bound state, owing to GTPase activity of alpha-tubulin. The chain is Tubulin alpha-A chain (tba-1) from Neurospora crassa (strain ATCC 24698 / 74-OR23-1A / CBS 708.71 / DSM 1257 / FGSC 987).